A 383-amino-acid polypeptide reads, in one-letter code: Glucose-1-phosphate adenylyltransferase (383 aa).

Alpha-D-glucose 1-phosphate-binding positions include tyrosine 100, glycine 165, 180-181 (EK), and serine 191.

It belongs to the bacterial/plant glucose-1-phosphate adenylyltransferase family. In terms of assembly, homotetramer.

The enzyme catalyses alpha-D-glucose 1-phosphate + ATP + H(+) = ADP-alpha-D-glucose + diphosphate. The protein operates within glycan biosynthesis; glycogen biosynthesis. Involved in the biosynthesis of ADP-glucose, a building block required for the elongation reactions to produce glycogen. Catalyzes the reaction between ATP and alpha-D-glucose 1-phosphate (G1P) to produce pyrophosphate and ADP-Glc. This Clostridium kluyveri (strain ATCC 8527 / DSM 555 / NBRC 12016 / NCIMB 10680 / K1) protein is Glucose-1-phosphate adenylyltransferase.